Here is a 151-residue protein sequence, read N- to C-terminus: MSEAAVEKIEGYVASVLQSMDVELVDIQFRCEGHGWVLRLFIDVEGGVTLDLCAQVSREVGQYLDVEDVIEQAYHLEVSSPGVERPLKSLANFERFAGKKARIKLHEPLNGEKTFEGIIGPVEDGEVSLLVDGKIAVKCGIEQLNKARLVL.

Belongs to the RimP family.

It localises to the cytoplasm. Required for maturation of 30S ribosomal subunits. This is Ribosome maturation factor RimP from Desulfotalea psychrophila (strain LSv54 / DSM 12343).